The primary structure comprises 353 residues: RNA 3'-terminal phosphate cyclase (353 aa).

Residues Q103 and 297-301 (HLADQ) each bind ATP. H322 serves as the catalytic Tele-AMP-histidine intermediate.

Belongs to the RNA 3'-terminal cyclase family. Type 1 subfamily.

It is found in the cytoplasm. It carries out the reaction a 3'-end 3'-phospho-ribonucleotide-RNA + ATP = a 3'-end 2',3'-cyclophospho-ribonucleotide-RNA + AMP + diphosphate. Functionally, catalyzes the conversion of 3'-phosphate to a 2',3'-cyclic phosphodiester at the end of RNA. The mechanism of action of the enzyme occurs in 3 steps: (A) adenylation of the enzyme by ATP; (B) transfer of adenylate to an RNA-N3'P to produce RNA-N3'PP5'A; (C) and attack of the adjacent 2'-hydroxyl on the 3'-phosphorus in the diester linkage to produce the cyclic end product. The biological role of this enzyme is unknown but it is likely to function in some aspects of cellular RNA processing. The polypeptide is RNA 3'-terminal phosphate cyclase (Salmonella heidelberg (strain SL476)).